A 213-amino-acid polypeptide reads, in one-letter code: Large ribosomal subunit protein uL3 (213 aa).

Positions 131-155 (GRASHGNSVSHRAHGSTGNNQDPGR) are disordered. Over residues 135-152 (HGNSVSHRAHGSTGNNQD) the composition is skewed to polar residues. An N5-methylglutamine modification is found at Gln151.

The protein belongs to the universal ribosomal protein uL3 family. In terms of assembly, part of the 50S ribosomal subunit. Forms a cluster with proteins L14 and L19. Methylated by PrmB.

In terms of biological role, one of the primary rRNA binding proteins, it binds directly near the 3'-end of the 23S rRNA, where it nucleates assembly of the 50S subunit. In Agrobacterium fabrum (strain C58 / ATCC 33970) (Agrobacterium tumefaciens (strain C58)), this protein is Large ribosomal subunit protein uL3.